The primary structure comprises 368 residues: F-box protein At3g17710 (368 aa).

Residues 1–46 enclose the F-box domain; that stretch reads MASVKLPWDLEEEILSRLPPRSLVRFRTVCKHWNGLFSDKRFVKKH.

The polypeptide is F-box protein At3g17710 (Arabidopsis thaliana (Mouse-ear cress)).